Consider the following 202-residue polypeptide: NADH-quinone oxidoreductase subunit B (202 aa).

The segment covering 1–13 (MSSPTTKFSNAAS) has biased composition (polar residues). The interval 1–32 (MSSPTTKFSNAASSAGGPRVTPAAASILDPRT) is disordered. [4Fe-4S] cluster contacts are provided by Cys-81, Cys-82, Cys-146, and Cys-176.

Belongs to the complex I 20 kDa subunit family. In terms of assembly, NDH-1 is composed of 14 different subunits. Subunits NuoB, C, D, E, F, and G constitute the peripheral sector of the complex. [4Fe-4S] cluster is required as a cofactor.

It is found in the cell inner membrane. The enzyme catalyses a quinone + NADH + 5 H(+)(in) = a quinol + NAD(+) + 4 H(+)(out). Functionally, NDH-1 shuttles electrons from NADH, via FMN and iron-sulfur (Fe-S) centers, to quinones in the respiratory chain. The immediate electron acceptor for the enzyme in this species is believed to be ubiquinone. Couples the redox reaction to proton translocation (for every two electrons transferred, four hydrogen ions are translocated across the cytoplasmic membrane), and thus conserves the redox energy in a proton gradient. In Nitrobacter hamburgensis (strain DSM 10229 / NCIMB 13809 / X14), this protein is NADH-quinone oxidoreductase subunit B.